Reading from the N-terminus, the 254-residue chain is Trypsin 3A1 (254 aa).

Positions 1 to 20 (MNQFLFVSFCALLGLSQVSA) are cleaved as a signal peptide. Residues 21-27 (ATLSSGR) constitute a propeptide, activation peptide. The 226-residue stretch at 28–253 (IVGGFQIDIA…VRQWIREVSE (226 aa)) folds into the Peptidase S1 domain. Cysteine 53 and cysteine 69 form a disulfide bridge. Active-site charge relay system residues include histidine 68 and aspartate 113. 2 cysteine pairs are disulfide-bonded: cysteine 178/cysteine 194 and cysteine 205/cysteine 229. The Charge relay system role is filled by serine 209.

It belongs to the peptidase S1 family. In terms of tissue distribution, midgut.

It localises to the secreted. Its subcellular location is the extracellular space. It carries out the reaction Preferential cleavage: Arg-|-Xaa, Lys-|-Xaa.. Functionally, major function may be to aid in digestion of the blood meal. The sequence is that of Trypsin 3A1 from Aedes aegypti (Yellowfever mosquito).